A 263-amino-acid chain; its full sequence is Non-functional protein STAY-GREEN, chloroplastic (263 aa).

The N-terminal 54 residues, 1–54 (MDTLTSAPLLTSKFKPSFSPQQKPCFPHRRRFENGKKKQSIVPVARLFGPAIFE), are a transit peptide targeting the chloroplast.

Belongs to the staygreen family.

It localises to the plastid. It is found in the chloroplast. Non-functional protein probably interfering with the disassembling mechanism of the intact light-harvesting complex of photosystem II (LHCII) in the thylakoid membranes. Responsible for a stay-green phenotype. The polypeptide is Non-functional protein STAY-GREEN, chloroplastic (SGR) (Pisum sativum (Garden pea)).